The sequence spans 500 residues: NAD(P)H-quinone oxidoreductase chain 4, chloroplastic (500 aa).

Transmembrane regions (helical) follow at residues 4 to 24 (FPWL…IFFL), 37 to 57 (ICIC…HFQL), 87 to 107 (IGPI…AWPI), 113 to 130 (LFHF…GSFS), 134 to 154 (LLLF…LLAM), 167 to 187 (FILY…GVAL), 208 to 228 (VLEI…LPII), 242 to 262 (HYST…YGLI), 272 to 292 (AHSI…IYAA), 305 to 325 (IAYS…SLTD), 330 to 350 (GALL…FLAG), 386 to 406 (LALP…GIIT), 411 to 431 (VLIP…LTPI), and 462 to 482 (LFLS…PDFV).

It belongs to the complex I subunit 4 family.

Its subcellular location is the plastid. It localises to the chloroplast thylakoid membrane. It carries out the reaction a plastoquinone + NADH + (n+1) H(+)(in) = a plastoquinol + NAD(+) + n H(+)(out). The enzyme catalyses a plastoquinone + NADPH + (n+1) H(+)(in) = a plastoquinol + NADP(+) + n H(+)(out). In Atropa belladonna (Belladonna), this protein is NAD(P)H-quinone oxidoreductase chain 4, chloroplastic.